The sequence spans 286 residues: Phosphatidylserine decarboxylase proenzyme (286 aa).

Catalysis depends on charge relay system; for autoendoproteolytic cleavage activity residues D90, H147, and S252. The active-site Schiff-base intermediate with substrate; via pyruvic acid; for decarboxylase activity is S252. A Pyruvic acid (Ser); by autocatalysis modification is found at S252.

This sequence belongs to the phosphatidylserine decarboxylase family. PSD-B subfamily. Prokaryotic type I sub-subfamily. In terms of assembly, heterodimer of a large membrane-associated beta subunit and a small pyruvoyl-containing alpha subunit. The cofactor is pyruvate. Is synthesized initially as an inactive proenzyme. Formation of the active enzyme involves a self-maturation process in which the active site pyruvoyl group is generated from an internal serine residue via an autocatalytic post-translational modification. Two non-identical subunits are generated from the proenzyme in this reaction, and the pyruvate is formed at the N-terminus of the alpha chain, which is derived from the carboxyl end of the proenzyme. The autoendoproteolytic cleavage occurs by a canonical serine protease mechanism, in which the side chain hydroxyl group of the serine supplies its oxygen atom to form the C-terminus of the beta chain, while the remainder of the serine residue undergoes an oxidative deamination to produce ammonia and the pyruvoyl prosthetic group on the alpha chain. During this reaction, the Ser that is part of the protease active site of the proenzyme becomes the pyruvoyl prosthetic group, which constitutes an essential element of the active site of the mature decarboxylase.

The protein resides in the cell membrane. The enzyme catalyses a 1,2-diacyl-sn-glycero-3-phospho-L-serine + H(+) = a 1,2-diacyl-sn-glycero-3-phosphoethanolamine + CO2. The protein operates within phospholipid metabolism; phosphatidylethanolamine biosynthesis; phosphatidylethanolamine from CDP-diacylglycerol: step 2/2. Its function is as follows. Catalyzes the formation of phosphatidylethanolamine (PtdEtn) from phosphatidylserine (PtdSer). The chain is Phosphatidylserine decarboxylase proenzyme from Pseudomonas fluorescens (strain SBW25).